We begin with the raw amino-acid sequence, 708 residues long: MEANHQRNDLGLVALTMLAQYHNISLNPEEIKHKFDLDGKGLSLTAWLLAAKSLALKAKHIKKEISRLHLVNLPALVWQDNGKHFLLVKVDTDNNRYLTYNLEQDAPQILSQDEFEACYQGQLILVTSRASVVGQLAKFDFTWFIPAVIKYRKIFLETLIVSIFLQIFALITPLFFQVVMDKVLVHRGFSTLNIITVALAIVIIFEIVLSGLRTYVFSHSTSRIDVELGAKLFRHLLSLPISYFENRRVGDTVARVRELDQIRNFLTGQALTSVLDLLFSFIFFAVMWYYSPKLTLVILGSLPCYILWSIFISPILRRRLDEKFARSADNQAFLVESVTAINMIKAMAVAPQMTDTWDKQLASYVSSSFRVTVLATIGQQGVQLIQKTVMVINLWLGAHLVISGDLSIGQLIAFNMLSGQVIAPVIRLAQLWQDFQQVGISVTRLGDVLNSPTEQYQGKLSLPEIKGDISFKNIRFRYKPDAPTILNNVNLEIRQGEVIGIVGRSGSGKSTLTKLLQRFYIPENGQVLIDGHDLALADPNWLRRQIGVVLQDNVLLNRSIRENIALSDPGMPMERVIYAAKLAGAHDFISELREGYNTIVGEQGAGLSGGQRQRIAIARALVNNPKILIFDEATSALDYESEHIIMQNMQKICQGRTVILIAHRLSTVKNADRIIVMEKGEIVEQGKHHELLQNSNGLYSYLHQLQLN.

The Peptidase C39 domain maps to 1–126 (MEANHQRNDL…ACYQGQLILV (126 aa)). One can recognise an ABC transmembrane type-1 domain in the interval 155–437 (FLETLIVSIF…LAQLWQDFQQ (283 aa)). 5 helical membrane-spanning segments follow: residues 159 to 179 (LIVS…FQVV), 192 to 212 (LNII…LSGL), 270 to 290 (ALTS…MWYY), 296 to 316 (LVIL…SPIL), and 389 to 409 (VMVI…LSIG). The region spanning 469 to 704 (ISFKNIRFRY…SNGLYSYLHQ (236 aa)) is the ABC transporter domain. Position 503-510 (503-510 (GRSGSGKS)) interacts with ATP.

It belongs to the ABC transporter superfamily. Protein-1 exporter (TC 3.A.1.109) family. Homodimer.

The protein localises to the cell inner membrane. It carries out the reaction ATP + H2O + proteinSide 1 = ADP + phosphate + proteinSide 2.. In terms of biological role, part of the ABC transporter complex LktBD involved in leukotoxin export. Transmembrane domains (TMD) form a pore in the inner membrane and the ATP-binding domain (NBD) is responsible for energy generation. The polypeptide is Leukotoxin translocation ATP-binding protein LktB (lktB) (Mannheimia haemolytica (Pasteurella haemolytica)).